Reading from the N-terminus, the 396-residue chain is Ribosomal RNA large subunit methyltransferase I (396 aa).

The PUA domain maps to 2–81 (SVRLVLAKGR…ESIDIAFFTR (80 aa)).

This sequence belongs to the methyltransferase superfamily. RlmI family.

The protein resides in the cytoplasm. It carries out the reaction cytidine(1962) in 23S rRNA + S-adenosyl-L-methionine = 5-methylcytidine(1962) in 23S rRNA + S-adenosyl-L-homocysteine + H(+). Its function is as follows. Specifically methylates the cytosine at position 1962 (m5C1962) of 23S rRNA. The polypeptide is Ribosomal RNA large subunit methyltransferase I (Escherichia coli O127:H6 (strain E2348/69 / EPEC)).